We begin with the raw amino-acid sequence, 160 residues long: Probable transcriptional regulator YgiV (160 aa).

Its function is as follows. Represses expression of mcbR. In Escherichia coli O157:H7, this protein is Probable transcriptional regulator YgiV (ygiV).